The chain runs to 841 residues: Taste receptor type 1 member 1 (841 aa).

The signal sequence occupies residues 1–20 (MLLCTARLVGLQLLISCCWA). The Extracellular segment spans residues 21–567 (FACHSTESSP…VFLALREHTS (547 aa)). 6 N-linked (GlcNAc...) asparagine glycosylation sites follow: asparagine 87, asparagine 88, asparagine 95, asparagine 291, asparagine 479, and asparagine 529. A helical transmembrane segment spans residues 568-588 (WVLLAANTLLLLLLLGTAGLF). At 589–603 (AWHLDTPVVRSAGGR) the chain is on the cytoplasmic side. The helical transmembrane segment at 604 to 624 (LCFLMLGSLAAGSGSLYGFFG) threads the bilayer. The Extracellular portion of the chain corresponds to 625-639 (EPTRPACLLRQALFA). A helical transmembrane segment spans residues 640–660 (LGFTIFLSCLTVRSFQLIIIF). Residues 661-680 (KFSTKVPTFYHAWVQNHGAG) are Cytoplasmic-facing. The helical transmembrane segment at 681–701 (LFVMISSAAQLLICLTWLVVW) threads the bilayer. At 702–725 (TPLPAREYQRFPHLVMLECTETNS) the chain is on the extracellular side. Residues 726 to 746 (LGFILAFLYNGLLSISAFACS) traverse the membrane as a helical segment. At 747-761 (YLGKDLPENYNEAKC) the chain is on the cytoplasmic side. Residues 762-782 (VTFSLLFNFVSWIAFFTTASV) form a helical membrane-spanning segment. Residues 783–795 (YDGKYLPAANMMA) are Extracellular-facing. The chain crosses the membrane as a helical span at residues 796–816 (GLSSLSSGFGGYFLPKCYVIL). At 817–841 (CRPDLNSTEHFQASIQDYTRRCGST) the chain is on the cytoplasmic side.

It belongs to the G-protein coupled receptor 3 family. TAS1R subfamily. Forms heterodimers with TAS1R3.

The protein resides in the cell membrane. In terms of biological role, putative taste receptor. TAS1R1/TAS1R3 responds to the umami taste stimulus (the taste of monosodium glutamate). Sequence differences within and between species can significantly influence the selectivity and specificity of taste responses. This chain is Taste receptor type 1 member 1 (TAS1R1), found in Homo sapiens (Human).